The primary structure comprises 470 residues: mRNA export factor ICP27 homolog (470 aa).

Disordered stretches follow at residues 1 to 31 (MALS…TGGD) and 73 to 202 (FSAS…AGDR). The span at 73–85 (FSASPQRAQPSNP) shows a compositional bias: polar residues. 2 stretches are compositionally biased toward basic residues: residues 94–107 (HGRR…RRNN) and 178–187 (RVHRNRRRGN). Zn(2+)-binding residues include cysteine 359, histidine 437, cysteine 441, and cysteine 446. The CHC2-type zinc finger occupies 359–446 (CYLSSSGSPT…HKRRCKADTC (88 aa)).

The protein belongs to the HHV-1 ICP27 protein family. Homodimer. Homodimerization is required for transactivation. Associates in a complex with RNA, and host export factors NXF1/TAP and ALYREF; these interactions allow nuclear export of viral transcripts. Interacts with three host shuttling SR proteins SRSF1, SRSF3 and SRSF7. Interacts with host SRPK1. Interacts with IE62; this interaction enhances IE62 transactivation.

The protein resides in the host cytoplasm. Its subcellular location is the host nucleus. Its function is as follows. Multifunctional regulator of the expression of viral genes that mediates nuclear export of viral intronless mRNAs. This immediate early (EI) protein promotes the nuclear export of viral intronless mRNAs by interacting with mRNAs and host NXF1/TAP. This is mRNA export factor ICP27 homolog from Equine herpesvirus 1 (strain Kentucky A) (EHV-1).